The chain runs to 377 residues: uncharacterized protein (377 aa).

Transmembrane regions (helical) follow at residues 23-43 (LKFILIILVVVIVGLLAFIAY) and 251-271 (GSFITYGIIDSSYVILSSISY).

The protein localises to the cell membrane. This is an uncharacterized protein from Methanocaldococcus jannaschii (strain ATCC 43067 / DSM 2661 / JAL-1 / JCM 10045 / NBRC 100440) (Methanococcus jannaschii).